The chain runs to 3364 residues: Salivary gland surface protein 1 (3364 aa).

Beta-propeller stretches follow at residues 1–344 (MLRI…VVDA) and 705–1216 (FEQE…LKAL). Asparagine 59 carries N-linked (GlcNAc...) asparagine glycosylation. Cystine bridges form between cysteine 251–cysteine 297 and cysteine 1128–cysteine 1139. Residues 345-2733 (VEPKLDQGSP…PVSQIDPDGQ (2389 aa)) are rhs/YD-repeats. The N-linked (GlcNAc...) asparagine glycan is linked to asparagine 1149. Residues 1345–1494 (NQELVQFLGF…VHVDHVRLSP (150 aa)) are carbohydrate-binding module (CBM). Residues 1575 to 1715 (HSWVESFSPY…VGIKDVIVME (141 aa)) are lectin carbohydrate-recognition domain (lectin-CRD). The segment at 2225–2304 (HDKCDQNLIP…SEKMLEQGYP (80 aa)) is wedge domain. Intrachain disulfides connect cysteine 2253/cysteine 2285 and cysteine 2407/cysteine 2421. A run of 5 helical transmembrane segments spans residues 2734-2754 (IAVT…LGAA), 2774-2794 (IGLF…AATF), 2805-2825 (MIAG…LGAA), 2844-2864 (WNGL…FVGI), and 2878-2898 (MIYA…GGGM). The segment at 3126 to 3216 (YSPDSDGNQI…ARIAPAALRN (91 aa)) is tox-SGS.

In terms of processing, probably cleaved at the C-terminus. As to expression, female saliva (at protein level). Female salivary gland (at protein level). Not detected in female carcass without salivary glands. Not detected in male tissues.

It is found in the cell membrane. It localises to the secreted. Its function is as follows. (Microbial infection) Facilitates, but is not essential for, invasion of salivary glands by Plasmodium gallinaceum. Plays a role in Plasmodium gallinaceum oocyst development in mosquito midgut. (Microbial infection) Probably facilitates Zika virus replication in salivary glands. The chain is Salivary gland surface protein 1 from Aedes aegypti (Yellowfever mosquito).